The primary structure comprises 239 residues: Serine protease SplC (239 aa).

An N-terminal signal peptide occupies residues methionine 1–alanine 36. Catalysis depends on charge relay system residues histidine 75, aspartate 113, and serine 193.

The protein belongs to the peptidase S1B family.

The protein localises to the secreted. This Staphylococcus aureus (strain MW2) protein is Serine protease SplC (splC).